Here is a 122-residue protein sequence, read N- to C-terminus: Large ribosomal subunit protein uL14 (122 aa).

The protein belongs to the universal ribosomal protein uL14 family. Part of the 50S ribosomal subunit. Forms a cluster with proteins L3 and L19. In the 70S ribosome, L14 and L19 interact and together make contacts with the 16S rRNA in bridges B5 and B8.

Functionally, binds to 23S rRNA. Forms part of two intersubunit bridges in the 70S ribosome. The chain is Large ribosomal subunit protein uL14 from Roseiflexus castenholzii (strain DSM 13941 / HLO8).